Reading from the N-terminus, the 305-residue chain is Homeobox protein NANOGP8 (305 aa).

Positions 1-96 are disordered; that stretch reads MSVDPACPQS…KEDKVPVKKQ (96 aa). Residues 65–82 are compositionally biased toward polar residues; it reads SPDSSTSPKGKQPTSAEN. Residues 95 to 154 constitute a DNA-binding region (homeobox); that stretch reads KQKTRTVFSSTQLCVLNDRFQRQKYLSLQQMQELSNILNLSYKQVKTWFQNQRMKSKRWQ. 8 consecutive repeat copies span residues 196–200, 201–205, 206–210, 216–220, 221–225, 226–230, 231–235, and 236–240. Residues 196 to 240 are 8 X repeats starting with a Trp in each unit; sequence WSNQTWNNSTWSNQTQNIQSWSNHSWNTQTWCTQSWNNQAWNSPF. The tract at residues 196 to 240 is sufficient for transactivation activity; the sequence is WSNQTWNNSTWSNQTQNIQSWSNHSWNTQTWCTQSWNNQAWNSPF. Positions 241 to 305 are sufficient for strong transactivation activity; the sequence is YNCGEESLQS…YSMNMQPEDV (65 aa).

This sequence belongs to the Nanog homeobox family.

The protein localises to the nucleus. In terms of biological role, may act as a transcription regulator. When overexpressed, promotes entry of cells into S phase and cell proliferation. The polypeptide is Homeobox protein NANOGP8 (NANOGP8) (Homo sapiens (Human)).